We begin with the raw amino-acid sequence, 795 residues long: Histidine biosynthesis trifunctional protein (795 aa).

A phosphoribosyl-AMP cyclohydrolase region spans residues 1–225 (MLPVVPVFNA…VVRQGGSGSF (225 aa)). Residues 226 to 308 (CHLETESCFG…FYFAMARLVA (83 aa)) are phosphoribosyl-ATP pyrophosphohydrolase. The segment at 309–795 (NGVSLEDVER…KLGLLPSGFE (487 aa)) is histidinol dehydrogenase. Zn(2+)-binding residues include Q614 and H617. Active-site residues include E683 and H684. Zn(2+)-binding residues include D717 and H776.

It in the C-terminal section; belongs to the histidinol dehydrogenase family. It depends on Zn(2+) as a cofactor.

It carries out the reaction 1-(5-phospho-beta-D-ribosyl)-5'-AMP + H2O = 1-(5-phospho-beta-D-ribosyl)-5-[(5-phospho-beta-D-ribosylamino)methylideneamino]imidazole-4-carboxamide. The catalysed reaction is 1-(5-phospho-beta-D-ribosyl)-ATP + H2O = 1-(5-phospho-beta-D-ribosyl)-5'-AMP + diphosphate + H(+). The enzyme catalyses L-histidinol + 2 NAD(+) + H2O = L-histidine + 2 NADH + 3 H(+). Its pathway is amino-acid biosynthesis; L-histidine biosynthesis; L-histidine from 5-phospho-alpha-D-ribose 1-diphosphate: step 2/9. It participates in amino-acid biosynthesis; L-histidine biosynthesis; L-histidine from 5-phospho-alpha-D-ribose 1-diphosphate: step 3/9. The protein operates within amino-acid biosynthesis; L-histidine biosynthesis; L-histidine from 5-phospho-alpha-D-ribose 1-diphosphate: step 9/9. The sequence is that of Histidine biosynthesis trifunctional protein (HIS4) from Kluyveromyces lactis (strain ATCC 8585 / CBS 2359 / DSM 70799 / NBRC 1267 / NRRL Y-1140 / WM37) (Yeast).